A 112-amino-acid polypeptide reads, in one-letter code: Protein Churchill (112 aa).

11 residues coordinate Zn(2+): Cys2, Cys5, Cys30, Cys33, His59, Cys61, Cys64, His66, His71, Cys88, and Cys91.

Belongs to the Churchill family.

In terms of biological role, transcriptional activator that mediates FGF signaling during neural development. Plays a role in the regulation of cell movement. Functionally, does not bind DNA by itself. This chain is Protein Churchill (CHURC1), found in Homo sapiens (Human).